A 313-amino-acid polypeptide reads, in one-letter code: tRNA dimethylallyltransferase (313 aa).

10–17 (GPTASGKT) lines the ATP pocket. Position 12-17 (12-17 (TASGKT)) interacts with substrate. 3 interaction with substrate tRNA regions span residues 35–38 (DSAM), 159–163 (QRIQR), and 240–245 (RCVGYR).

The protein belongs to the IPP transferase family. Monomer. Mg(2+) serves as cofactor.

The catalysed reaction is adenosine(37) in tRNA + dimethylallyl diphosphate = N(6)-dimethylallyladenosine(37) in tRNA + diphosphate. Catalyzes the transfer of a dimethylallyl group onto the adenine at position 37 in tRNAs that read codons beginning with uridine, leading to the formation of N6-(dimethylallyl)adenosine (i(6)A). This is tRNA dimethylallyltransferase from Legionella pneumophila (strain Lens).